A 458-amino-acid chain; its full sequence is MKKKYFGTDGIRGKVGEFPITPEFFLRLGYAVGKVLLASDWKLAADKRPTILIGKDTRISGYMLESALEAGFSAAGVDVLLSGPLPTPAVAYLVRALRIQAGAVISASHNPFYDNGIKFFSSEGSKLPDSMELQIEAELDFPIETAPSIKLGRVQRLKDEEGRYIEFCKSTFPNQLDLRGWKIVVDCANGADYQVAGHVMHELGADVVTIHANPDGFNINHECGATHIMTLQGAVLQHGADFGIAVDGDGDRVLMVSGEGVVYDGDSLAYIIAKHRQQRGVLQGGVVGTLMTNLAVEQAFERIGIPFARANVGDRYVSELLQQNDWYLGAENSGHIICRDKHTTGDGIISALQVLYALRDTGLMFADLMHDVTFFPQRLINVKISRDFDFQNDQAVEICKNEAEQALGNDGRILLRASGTEPLIRVMVEGKDPQQIEYWAEKIAGTIQQQAVASTVGH.

Serine 108 serves as the catalytic Phosphoserine intermediate. The Mg(2+) site is built by serine 108, aspartate 247, aspartate 249, and aspartate 251. Serine 108 is modified (phosphoserine).

Belongs to the phosphohexose mutase family. Requires Mg(2+) as cofactor. In terms of processing, activated by phosphorylation.

It catalyses the reaction alpha-D-glucosamine 1-phosphate = D-glucosamine 6-phosphate. Catalyzes the conversion of glucosamine-6-phosphate to glucosamine-1-phosphate. The protein is Phosphoglucosamine mutase of Nitrosomonas eutropha (strain DSM 101675 / C91 / Nm57).